A 316-amino-acid polypeptide reads, in one-letter code: Acetyl-coenzyme A carboxylase carboxyl transferase subunit alpha (316 aa).

Positions 36-290 (LLEERLARLR…KEALLKALEE (255 aa)) constitute a CoA carboxyltransferase C-terminal domain.

This sequence belongs to the AccA family. As to quaternary structure, acetyl-CoA carboxylase is a heterohexamer composed of biotin carboxyl carrier protein (AccB), biotin carboxylase (AccC) and two subunits each of ACCase subunit alpha (AccA) and ACCase subunit beta (AccD).

It is found in the cytoplasm. It carries out the reaction N(6)-carboxybiotinyl-L-lysyl-[protein] + acetyl-CoA = N(6)-biotinyl-L-lysyl-[protein] + malonyl-CoA. The protein operates within lipid metabolism; malonyl-CoA biosynthesis; malonyl-CoA from acetyl-CoA: step 1/1. In terms of biological role, component of the acetyl coenzyme A carboxylase (ACC) complex. First, biotin carboxylase catalyzes the carboxylation of biotin on its carrier protein (BCCP) and then the CO(2) group is transferred by the carboxyltransferase to acetyl-CoA to form malonyl-CoA. This chain is Acetyl-coenzyme A carboxylase carboxyl transferase subunit alpha, found in Thermus thermophilus (strain ATCC 27634 / DSM 579 / HB8).